The chain runs to 186 residues: Superoxide dismutase [Cu-Zn] (186 aa).

Residues methionine 1 to alanine 20 form the signal peptide. Positions 79, 81, and 104 each coordinate Cu cation. A disulfide bridge links cysteine 86 with cysteine 182. 4 residues coordinate Zn(2+): histidine 104, histidine 113, histidine 122, and aspartate 125. Histidine 160 is a Cu cation binding site.

Belongs to the Cu-Zn superoxide dismutase family. In terms of assembly, homodimer. It depends on Cu cation as a cofactor. Zn(2+) serves as cofactor.

The protein resides in the periplasm. The enzyme catalyses 2 superoxide + 2 H(+) = H2O2 + O2. Its function is as follows. Destroys radicals which are normally produced within the cells and which are toxic to biological systems. This Pasteurella multocida (strain Pm70) protein is Superoxide dismutase [Cu-Zn] (sodC).